Reading from the N-terminus, the 107-residue chain is uncharacterized protein (107 aa).

Residues 13 to 68 enclose the HTH cro/C1-type domain; the sequence is LQEEFLEPLSLKISDLAQILDVHRNTASNIVNNSSRITLEMAVKLAKVFDTTPEFW. The H-T-H motif DNA-binding region spans 24–43; the sequence is KISDLAQILDVHRNTASNIV.

Belongs to the VapA/VapI family.

This is an uncharacterized protein from Haemophilus influenzae (strain ATCC 51907 / DSM 11121 / KW20 / Rd).